Consider the following 103-residue polypeptide: N(4)-acetylcytidine amidohydrolase (103 aa).

The 96-residue stretch at 6 to 101 folds into the ASCH domain; the sequence is ITFFQRFQDD…QTQFYVIEFK (96 aa). Catalysis depends on Lys21, which acts as the Proton acceptor. Thr24 functions as the Nucleophile in the catalytic mechanism. The active-site Proton donor is the Glu74.

Belongs to the N(4)-acetylcytidine amidohydrolase family.

The enzyme catalyses N(4)-acetylcytidine + H2O = cytidine + acetate + H(+). It catalyses the reaction N(4)-acetyl-2'-deoxycytidine + H2O = 2'-deoxycytidine + acetate + H(+). The catalysed reaction is N(4)-acetylcytosine + H2O = cytosine + acetate + H(+). In terms of biological role, catalyzes the hydrolysis of N(4)-acetylcytidine (ac4C). This chain is N(4)-acetylcytidine amidohydrolase (yqfB), found in Escherichia coli (strain K12 / MC4100 / BW2952).